Here is a 193-residue protein sequence, read N- to C-terminus: MNAIPYVVEQTKLGERSYDIYSRLLKDRIVIIGSEINDQVASSVVAQLLFLEAEDAEKDIFLYINSPGGSTTAGFAILDTMNLIKPDVQTLCMGFAASFGALLLLSGAKGKRFALPNSEIMIHQPLGGAQGQATEIEITAKRILKLKHDINKMIAEKTGQPIERVAHDTERDYFMTAEEAKAYGIVDDVVTKK.

Ser98 serves as the catalytic Nucleophile. Residue His123 is part of the active site.

The protein belongs to the peptidase S14 family. Fourteen ClpP subunits assemble into 2 heptameric rings which stack back to back to give a disk-like structure with a central cavity, resembling the structure of eukaryotic proteasomes.

It is found in the cytoplasm. The enzyme catalyses Hydrolysis of proteins to small peptides in the presence of ATP and magnesium. alpha-casein is the usual test substrate. In the absence of ATP, only oligopeptides shorter than five residues are hydrolyzed (such as succinyl-Leu-Tyr-|-NHMec, and Leu-Tyr-Leu-|-Tyr-Trp, in which cleavage of the -Tyr-|-Leu- and -Tyr-|-Trp bonds also occurs).. Functionally, cleaves peptides in various proteins in a process that requires ATP hydrolysis. Has a chymotrypsin-like activity. Plays a major role in the degradation of misfolded proteins. This is ATP-dependent Clp protease proteolytic subunit 1 from Bacillus anthracis.